The chain runs to 191 residues: Glycerol-3-phosphate acyltransferase (191 aa).

Transmembrane regions (helical) follow at residues 10–30, 57–77, 84–104, 118–138, and 158–178; these read LAFIIFVYVIAAIPFGRCISA, FGSVVFMLDFLKAAAPVFLAV, FASTVGFVAVFAHVFSVYMAF, FVLVLPVFIVAVCTWGIFFVL, and YALLELYVFLPILAGTVLIFI.

Belongs to the PlsY family. Probably interacts with PlsX.

The protein resides in the cell inner membrane. The catalysed reaction is an acyl phosphate + sn-glycerol 3-phosphate = a 1-acyl-sn-glycero-3-phosphate + phosphate. It functions in the pathway lipid metabolism; phospholipid metabolism. Functionally, catalyzes the transfer of an acyl group from acyl-phosphate (acyl-PO(4)) to glycerol-3-phosphate (G3P) to form lysophosphatidic acid (LPA). This enzyme utilizes acyl-phosphate as fatty acyl donor, but not acyl-CoA or acyl-ACP. In Neorickettsia sennetsu (strain ATCC VR-367 / Miyayama) (Ehrlichia sennetsu), this protein is Glycerol-3-phosphate acyltransferase.